The following is a 602-amino-acid chain: Elongation factor 4 (602 aa).

Positions Ser-7–Ala-189 constitute a tr-type G domain. GTP-binding positions include Asp-19 to Thr-24 and Asn-136 to Asp-139.

This sequence belongs to the TRAFAC class translation factor GTPase superfamily. Classic translation factor GTPase family. LepA subfamily.

It localises to the cell inner membrane. It catalyses the reaction GTP + H2O = GDP + phosphate + H(+). Required for accurate and efficient protein synthesis under certain stress conditions. May act as a fidelity factor of the translation reaction, by catalyzing a one-codon backward translocation of tRNAs on improperly translocated ribosomes. Back-translocation proceeds from a post-translocation (POST) complex to a pre-translocation (PRE) complex, thus giving elongation factor G a second chance to translocate the tRNAs correctly. Binds to ribosomes in a GTP-dependent manner. The protein is Elongation factor 4 of Synechococcus sp. (strain CC9902).